Consider the following 183-residue polypeptide: Myelin-associated oligodendrocyte basic protein (183 aa).

Positions 68–183 (TRTSRRAKSP…GSPVKASRFW (116 aa)) are disordered. Over residues 69–78 (RTSRRAKSPQ) the composition is skewed to basic residues. The segment covering 79–96 (RPKQQPAAPPAVVRAPAK) has biased composition (low complexity). Tandem repeats lie at residues 97-106 (PRSPPRSERQ), 107-116 (PRSPPRSERQ), 117-126 (PRSPPRSERQ), and 127-136 (PRSPPRSERQ). The 4 X 10 AA tandem repeats of P-R-S-P-P-R-S-E-R-Q stretch occupies residues 97–136 (PRSPPRSERQPRSPPRSERQPRSPPRSERQPRSPPRSERQ). Ser-99 and Ser-109 each carry phosphoserine. Positions 101-143 (PRSERQPRSPPRSERQPRSPPRSERQPRSPPRSERQPRPRPEV) are enriched in basic and acidic residues. The span at 151 to 164 (RPPQKSKQQPRSSP) shows a compositional bias: low complexity.

The protein resides in the cytoplasm. It localises to the perinuclear region. May play a role in compacting or stabilizing the myelin sheath, possibly by binding the negatively charged acidic phospholipids of the cytoplasmic membrane. In Homo sapiens (Human), this protein is Myelin-associated oligodendrocyte basic protein (MOBP).